A 250-amino-acid polypeptide reads, in one-letter code: tRNA pseudouridine synthase A (250 aa).

The active-site Nucleophile is the D52. Residue Y111 participates in substrate binding.

This sequence belongs to the tRNA pseudouridine synthase TruA family. In terms of assembly, homodimer.

It carries out the reaction uridine(38/39/40) in tRNA = pseudouridine(38/39/40) in tRNA. Functionally, formation of pseudouridine at positions 38, 39 and 40 in the anticodon stem and loop of transfer RNAs. This is tRNA pseudouridine synthase A from Methylorubrum extorquens (strain PA1) (Methylobacterium extorquens).